Reading from the N-terminus, the 345-residue chain is MAAPGKLSTCRLPPLPTIREIIKLFRLQATKQLSQNFLLDLRLTDKIVRKAGNLANAYVYEVGPGPGGITRSILNADVAELLVVEKDTRFIPGLQMLSEAAPGKLRIVHGDVLTFKVEKAFSESLKRPWEDDPPNVHIIGNLPFSVSTPLIIKWLENISCRDGPFVYGRTQMTLTFQKEVAERLAANTGSKQRSRLSVMAQYLCNVRHIFTIPGRAFVPKPEVDVGVVHFTPLIQPKIEQPFKLVEKVVQNVFQFRRKYCHRGLGMLFPEAQRLENTGRLLELADIDPTLRPRQLSISHFKSLCEVYRRMCDEDPQLFAYNFREELRQRKIKKKEKQDDAKSYRL.

The transit peptide at 1–27 directs the protein to the mitochondrion; the sequence is MAAPGKLSTCRLPPLPTIREIIKLFRL. The S-adenosyl-L-methionine site is built by leucine 38, glycine 63, glutamate 85, lysine 86, aspartate 111, valine 112, and asparagine 141.

This sequence belongs to the class I-like SAM-binding methyltransferase superfamily. rRNA adenine N(6)-methyltransferase family. KsgA subfamily. Interacts with mitochondrial RNA polymerase POLRMT. Interacts with TFAM. Bound to the maturing mtSSU until the late stages of assembly.

The protein resides in the mitochondrion. It catalyses the reaction adenosine(N)/adenosine(N+1) in rRNA + 4 S-adenosyl-L-methionine = N(6)-dimethyladenosine(N)/N(6)-dimethyladenosine(N+1) in rRNA + 4 S-adenosyl-L-homocysteine + 4 H(+). In terms of biological role, mitochondrial methyltransferase which uses S-adenosyl methionine to dimethylate two highly conserved adjacent adenosine residues (A1583 and A1584) within the loop of helix 45 at the 3-prime end of 12S rRNA, thereby regulating the assembly or stability of the small subunit of the mitochondrial ribosome. Also required for basal transcription of mitochondrial DNA, probably via its interaction with POLRMT and TFAM. Stimulates transcription independently of the methyltransferase activity. This chain is Dimethyladenosine transferase 1, mitochondrial (TFB1M), found in Macaca fascicularis (Crab-eating macaque).